We begin with the raw amino-acid sequence, 313 residues long: Recombination-promoting nuclease pSLT051 (313 aa).

The protein belongs to the Rpn/YhgA-like nuclease family.

A low activity DNA endonuclease probably yielding 3'-hydroxyl ends. Involved in RecA-independent recombination and horizontal gene transfer. This Salmonella typhimurium (strain LT2 / SGSC1412 / ATCC 700720) protein is Recombination-promoting nuclease pSLT051.